The primary structure comprises 62 residues: Chymotrypsin inhibitor SCI-II (62 aa).

The BPTI/Kunitz inhibitor domain occupies 9-60 (CEQAFGNSGPCFAYIKLYSYNQKTKKCEEFIYGGCKGNDNRFDTLAECEQKC). Disulfide bonds link C9/C60, C19/C43, and C35/C56.

In terms of biological role, inhibits chymotrypsin and thus avoids the accidental chymotrypsin-mediated activation of prophenoloxidase. This enzyme is required by the insect immune system to produce melanin which is used to engulf foreign objects. Its function is as follows. Also inhibits trypsin weakly, this may be due to the presence of a pseudo-reactive bond in positions 44-45 (Lys-Gly). In Bombyx mori (Silk moth), this protein is Chymotrypsin inhibitor SCI-II.